The sequence spans 151 residues: Proline-rich acidic protein 1 (151 aa).

Residues 1 to 20 form the signal peptide; sequence MRRLLLVTSLVVVLLWEAGA. The tract at residues 71-151 is disordered; sequence LTTEEKPRGQ…EDQDHIYHPQ (81 aa).

Interacts with isoform 1 and isoform 3 of MAD1L1. Interacts with MTTP. As to expression, highly expressed in the intestinal epithelial cells (at protein level). Abundantly expressed in the epithelial cells of the liver, kidney and cervix. Significantly down-regulated in hepatocellular carcinoma and right colon adenocarcinoma compared with the respective adjacent normal tissues. Expressed in epididymis (at protein level).

Its subcellular location is the secreted. The protein resides in the endoplasmic reticulum. Functionally, lipid-binding protein which promotes lipid absorption by facilitating MTTP-mediated lipid transfer (mainly triglycerides and phospholipids) and MTTP-mediated apoB lipoprotein assembly and secretion. Protects the gastrointestinal epithelium from irradiation-induced apoptosis. May play an important role in maintaining normal growth homeostasis in epithelial cells. Involved in p53/TP53-dependent cell survival after DNA damage. May down-regulate the expression of MAD1L1 and exert a suppressive role in mitotic spindle assembly checkpoint in hepatocellular carcinomas. The polypeptide is Proline-rich acidic protein 1 (PRAP1) (Homo sapiens (Human)).